We begin with the raw amino-acid sequence, 846 residues long: DNA mismatch repair protein MutS (846 aa).

Gly594–Ser601 serves as a coordination point for ATP.

It belongs to the DNA mismatch repair MutS family.

In terms of biological role, this protein is involved in the repair of mismatches in DNA. It is possible that it carries out the mismatch recognition step. This protein has a weak ATPase activity. This is DNA mismatch repair protein MutS from Macrococcus caseolyticus (strain JCSC5402) (Macrococcoides caseolyticum).